Consider the following 309-residue polypeptide: Ribonuclease Z (309 aa).

Positions 63, 65, 67, 68, 141, 212, and 270 each coordinate Zn(2+). The Proton acceptor role is filled by D67.

This sequence belongs to the RNase Z family. Homodimer. Zn(2+) is required as a cofactor.

The catalysed reaction is Endonucleolytic cleavage of RNA, removing extra 3' nucleotides from tRNA precursor, generating 3' termini of tRNAs. A 3'-hydroxy group is left at the tRNA terminus and a 5'-phosphoryl group is left at the trailer molecule.. Functionally, zinc phosphodiesterase, which displays some tRNA 3'-processing endonuclease activity. Probably involved in tRNA maturation, by removing a 3'-trailer from precursor tRNA. In Lactobacillus gasseri (strain ATCC 33323 / DSM 20243 / BCRC 14619 / CIP 102991 / JCM 1131 / KCTC 3163 / NCIMB 11718 / NCTC 13722 / AM63), this protein is Ribonuclease Z.